A 133-amino-acid polypeptide reads, in one-letter code: Small ribosomal subunit protein uS8 (133 aa).

The protein belongs to the universal ribosomal protein uS8 family. Part of the 30S ribosomal subunit. Contacts proteins S5 and S12.

Functionally, one of the primary rRNA binding proteins, it binds directly to 16S rRNA central domain where it helps coordinate assembly of the platform of the 30S subunit. In Prochlorococcus marinus (strain MIT 9215), this protein is Small ribosomal subunit protein uS8.